A 443-amino-acid polypeptide reads, in one-letter code: Thymidine phosphorylase (443 aa).

The protein belongs to the thymidine/pyrimidine-nucleoside phosphorylase family. In terms of assembly, homodimer.

The catalysed reaction is thymidine + phosphate = 2-deoxy-alpha-D-ribose 1-phosphate + thymine. It participates in pyrimidine metabolism; dTMP biosynthesis via salvage pathway; dTMP from thymine: step 1/2. Functionally, the enzymes which catalyze the reversible phosphorolysis of pyrimidine nucleosides are involved in the degradation of these compounds and in their utilization as carbon and energy sources, or in the rescue of pyrimidine bases for nucleotide synthesis. In Shewanella amazonensis (strain ATCC BAA-1098 / SB2B), this protein is Thymidine phosphorylase.